The following is a 248-amino-acid chain: Anamorsin homolog (248 aa).

The N-terminal SAM-like domain stretch occupies residues 4 to 129; it reads FKGLQKSLYI…ETGSSARLSF (126 aa). Residues 130–161 form a linker region; sequence AKKNASAINVWKISGDDEELIDEEELLDEEDK. Positions 172, 181, 184, and 186 each coordinate [2Fe-2S] cluster. Residues 172–186 form a fe-S binding site A region; that stretch reads CSTTGKRKACKNCSC. The [4Fe-4S] cluster site is built by Cys-209, Cys-212, Cys-220, and Cys-223. 2 short sequence motifs (cx2C motif) span residues 209 to 212 and 220 to 223; these read CGNC and CSTC. The segment at 209-223 is fe-S binding site B; that stretch reads CGNCYLGDAFRCSTC.

This sequence belongs to the anamorsin family. As to quaternary structure, monomer. [2Fe-2S] cluster serves as cofactor. Requires [4Fe-4S] cluster as cofactor.

It localises to the cytoplasm. The protein resides in the mitochondrion intermembrane space. Functionally, component of the cytosolic iron-sulfur (Fe-S) protein assembly (CIA) machinery. Required for the maturation of extramitochondrial Fe-S proteins. Part of an electron transfer chain functioning in an early step of cytosolic Fe-S biogenesis, facilitating the de novo assembly of a [4Fe-4S] cluster on the cytosolic Fe-S scaffold complex. Electrons are transferred from NADPH via a FAD- and FMN-containing diflavin oxidoreductase. Together with the diflavin oxidoreductase, also required for the assembly of the diferric tyrosyl radical cofactor of ribonucleotide reductase (RNR), probably by providing electrons for reduction during radical cofactor maturation in the catalytic small subunit. The sequence is that of Anamorsin homolog from Drosophila erecta (Fruit fly).